Here is a 140-residue protein sequence, read N- to C-terminus: UPF0654 protein C22G7.11c (140 aa).

Disordered regions lie at residues 1–88 (MPDP…DPMK) and 110–140 (YKATMHNPNVSKQAKTRAQRALEEIDDETQA). Basic and acidic residues predominate over residues 24–33 (AKERAEDYIE). Residues 34–44 (SHSSGQETGDY) show a composition bias toward polar residues. Residues 54–71 (DYEDLGDYDEDADFDNEE) are compositionally biased toward acidic residues.

It belongs to the UPF0654 (con-6) family.

The polypeptide is UPF0654 protein C22G7.11c (Schizosaccharomyces pombe (strain 972 / ATCC 24843) (Fission yeast)).